The following is a 204-amino-acid chain: uncharacterized protein (204 aa).

A signal peptide spans 1-21 (MIKKFLLFAMLNIFLTNKAHS).

This is an uncharacterized protein from Borreliella burgdorferi (strain ATCC 35210 / DSM 4680 / CIP 102532 / B31) (Borrelia burgdorferi).